The primary structure comprises 311 residues: 4-diphosphocytidyl-2-C-methyl-D-erythritol kinase (311 aa).

K13 is an active-site residue. Residue P114–A124 participates in ATP binding. D156 is a catalytic residue.

Belongs to the GHMP kinase family. IspE subfamily.

It catalyses the reaction 4-CDP-2-C-methyl-D-erythritol + ATP = 4-CDP-2-C-methyl-D-erythritol 2-phosphate + ADP + H(+). Its pathway is isoprenoid biosynthesis; isopentenyl diphosphate biosynthesis via DXP pathway; isopentenyl diphosphate from 1-deoxy-D-xylulose 5-phosphate: step 3/6. Functionally, catalyzes the phosphorylation of the position 2 hydroxy group of 4-diphosphocytidyl-2C-methyl-D-erythritol. This is 4-diphosphocytidyl-2-C-methyl-D-erythritol kinase from Corynebacterium diphtheriae (strain ATCC 700971 / NCTC 13129 / Biotype gravis).